Consider the following 318-residue polypeptide: NADH-ubiquinone oxidoreductase chain 1 (318 aa).

Helical transmembrane passes span 2–22, 37–57, 69–89, 100–120, 136–156, 171–191, 231–251, 253–273, and 293–313; these read FLMNILCLVIPILLAMAFLTL, PNIVGPYGLLQPIADAIKLFI, LMFTLAPTLAFTLALSLWIPM, LGVLFILALSSLAVYSILWSG, VAQTISYEVTLAIILLSIMMM, HMWLIFPLWPLAMMWFISTLA, IIMMNALTTTLFLGAFHNPLF, ELFTVNFITKTLILTMMFLWV, and FLPLTLALCMFHVSMPALSAG.

The protein belongs to the complex I subunit 1 family. As to quaternary structure, core subunit of respiratory chain NADH dehydrogenase (Complex I) which is composed of 45 different subunits.

It localises to the mitochondrion inner membrane. The catalysed reaction is a ubiquinone + NADH + 5 H(+)(in) = a ubiquinol + NAD(+) + 4 H(+)(out). Functionally, core subunit of the mitochondrial membrane respiratory chain NADH dehydrogenase (Complex I) which catalyzes electron transfer from NADH through the respiratory chain, using ubiquinone as an electron acceptor. Essential for the catalytic activity and assembly of complex I. This chain is NADH-ubiquinone oxidoreductase chain 1 (MT-ND1), found in Euphractus sexcinctus (Six-banded armadillo).